A 34-amino-acid polypeptide reads, in one-letter code: Potassium channel toxin alpha-KTx 18.2 (34 aa).

Intrachain disulfides connect cysteine 7–cysteine 26, cysteine 12–cysteine 31, and cysteine 16–cysteine 33.

In terms of tissue distribution, expressed by the venom gland.

The protein localises to the secreted. Its function is as follows. Reversibly blocks Shaker B potassium channels. The polypeptide is Potassium channel toxin alpha-KTx 18.2 (Tityus discrepans (Venezuelan scorpion)).